Reading from the N-terminus, the 58-residue chain is Ribulose bisphosphate carboxylase large chain (58 aa).

Positions 1–2 (MS) are excised as a propeptide. N-acetylproline is present on P3. N6,N6,N6-trimethyllysine is present on K14.

This sequence belongs to the RuBisCO large chain family. Type I subfamily. As to quaternary structure, heterohexadecamer of 8 large chains and 8 small chains.

The protein resides in the plastid. Its subcellular location is the chloroplast. It carries out the reaction 2 (2R)-3-phosphoglycerate + 2 H(+) = D-ribulose 1,5-bisphosphate + CO2 + H2O. The catalysed reaction is D-ribulose 1,5-bisphosphate + O2 = 2-phosphoglycolate + (2R)-3-phosphoglycerate + 2 H(+). Functionally, ruBisCO catalyzes two reactions: the carboxylation of D-ribulose 1,5-bisphosphate, the primary event in carbon dioxide fixation, as well as the oxidative fragmentation of the pentose substrate in the photorespiration process. Both reactions occur simultaneously and in competition at the same active site. This chain is Ribulose bisphosphate carboxylase large chain (rbcL), found in Weinmannia silvicola (Towai).